Here is a 254-residue protein sequence, read N- to C-terminus: Tabinhibitin 6 (254 aa).

Residues 1-22 (MLPYWCPLLLAALVLQYATIDA) form the signal peptide. Residues 31 to 33 (RGD) carry the Cell attachment site motif. One can recognise an SCP domain in the interval 66 to 210 (LSKINDVRDH…KARALLTCNF (145 aa)).

This sequence belongs to the CRISP family. As to expression, expressed in salivary glands.

The protein resides in the secreted. Its function is as follows. Inhibits platelet aggregation induced by all agonists tested (ADP, arachidonic acid, the thromboxane A2 analog U46619, thrombin, and snake venom snaclecs (TMVA that activates platelet through GPIB, and stejnulxin that specifically acts through GPVI (GP6))). May act by competing with fibrinogen for binding to glycoprotein IIb/IIIa (ITGA2B/ITGB3). The protein is Tabinhibitin 6 of Tabanus yao (Horsefly).